The chain runs to 106 residues: MRGNIAQLMQQAQKMQENLQKAQEEIAKIEVTGSAGGGMVSVTLTGAKECRKVRIDPSLASDPEMLEDLIAAAFNDASNKIDAESKSKMGSATAGMQLPPGMKLPF.

A disordered region spans residues 81–106 (IDAESKSKMGSATAGMQLPPGMKLPF).

The protein belongs to the YbaB/EbfC family. As to quaternary structure, homodimer.

It localises to the cytoplasm. The protein resides in the nucleoid. Functionally, binds to DNA and alters its conformation. May be involved in regulation of gene expression, nucleoid organization and DNA protection. The sequence is that of Nucleoid-associated protein Smal_0858 from Stenotrophomonas maltophilia (strain R551-3).